Consider the following 470-residue polypeptide: 3-isopropylmalate dehydratase large subunit (470 aa).

Residues 294-307 (PDQNTGISGSTPNP) show a composition bias toward polar residues. A disordered region spans residues 294–313 (PDQNTGISGSTPNPSDAADD). 3 residues coordinate [4Fe-4S] cluster: C347, C407, and C410.

The protein belongs to the aconitase/IPM isomerase family. LeuC type 1 subfamily. In terms of assembly, heterodimer of LeuC and LeuD. It depends on [4Fe-4S] cluster as a cofactor.

It carries out the reaction (2R,3S)-3-isopropylmalate = (2S)-2-isopropylmalate. It participates in amino-acid biosynthesis; L-leucine biosynthesis; L-leucine from 3-methyl-2-oxobutanoate: step 2/4. Its function is as follows. Catalyzes the isomerization between 2-isopropylmalate and 3-isopropylmalate, via the formation of 2-isopropylmaleate. The protein is 3-isopropylmalate dehydratase large subunit of Akkermansia muciniphila (strain ATCC BAA-835 / DSM 22959 / JCM 33894 / BCRC 81048 / CCUG 64013 / CIP 107961 / Muc).